The chain runs to 339 residues: NADH-quinone oxidoreductase subunit H (339 aa).

9 helical membrane-spanning segments follow: residues isoleucine 9–cysteine 29, proline 50–phenylalanine 70, isoleucine 82–isoleucine 102, valine 115–glycine 135, methionine 161–isoleucine 181, methionine 187–leucine 207, methionine 235–threonine 255, isoleucine 275–isoleucine 295, and glycine 311–valine 331.

Belongs to the complex I subunit 1 family. In terms of assembly, NDH-1 is composed of 14 different subunits. Subunits NuoA, H, J, K, L, M, N constitute the membrane sector of the complex.

It is found in the cell membrane. The enzyme catalyses a quinone + NADH + 5 H(+)(in) = a quinol + NAD(+) + 4 H(+)(out). Its function is as follows. NDH-1 shuttles electrons from NADH, via FMN and iron-sulfur (Fe-S) centers, to quinones in the respiratory chain. The immediate electron acceptor for the enzyme in this species is believed to be ubiquinone. Couples the redox reaction to proton translocation (for every two electrons transferred, four hydrogen ions are translocated across the cytoplasmic membrane), and thus conserves the redox energy in a proton gradient. This subunit may bind ubiquinone. This is NADH-quinone oxidoreductase subunit H from Rickettsia africae (strain ESF-5).